Consider the following 183-residue polypeptide: ATP synthase subunit delta (183 aa).

The protein belongs to the ATPase delta chain family. As to quaternary structure, F-type ATPases have 2 components, F(1) - the catalytic core - and F(0) - the membrane proton channel. F(1) has five subunits: alpha(3), beta(3), gamma(1), delta(1), epsilon(1). F(0) has three main subunits: a(1), b(2) and c(10-14). The alpha and beta chains form an alternating ring which encloses part of the gamma chain. F(1) is attached to F(0) by a central stalk formed by the gamma and epsilon chains, while a peripheral stalk is formed by the delta and b chains.

Its subcellular location is the cell inner membrane. Its function is as follows. F(1)F(0) ATP synthase produces ATP from ADP in the presence of a proton or sodium gradient. F-type ATPases consist of two structural domains, F(1) containing the extramembraneous catalytic core and F(0) containing the membrane proton channel, linked together by a central stalk and a peripheral stalk. During catalysis, ATP synthesis in the catalytic domain of F(1) is coupled via a rotary mechanism of the central stalk subunits to proton translocation. This protein is part of the stalk that links CF(0) to CF(1). It either transmits conformational changes from CF(0) to CF(1) or is implicated in proton conduction. This is ATP synthase subunit delta from Thermosipho africanus (strain TCF52B).